The chain runs to 383 residues: Polyketide synthase 4 (383 aa).

Cys164 functions as the Nucleophile and monoketide coumarate intermediate in the catalytic mechanism.

Belongs to the thiolase-like superfamily. Chalcone/stilbene synthases family. In terms of assembly, homodimer. As to expression, expressed in fruits.

The catalysed reaction is 4-coumaroyl-CoA + malonyl-CoA + H2O + H(+) = 4-hydroxybenzalacetone + 2 CO2 + 2 CoA. It catalyses the reaction (E)-4-coumaroyl-CoA + 3 malonyl-CoA + 3 H(+) = 2',4,4',6'-tetrahydroxychalcone + 3 CO2 + 4 CoA. It functions in the pathway secondary metabolite biosynthesis; flavonoid biosynthesis. With respect to regulation, inhibited by glutathione. Bifunctional polyketide synthase producing both 4-hydroxybenzalacetone and naringenin chalcone. Can use p-coumaryl-CoA and ferulyl-CoA as substrates. Catalyzes the initial key reaction step in the biosynthesis of phenylbutanoids. The protein is Polyketide synthase 4 (PKS4) of Rubus idaeus (Raspberry).